Reading from the N-terminus, the 276-residue chain is Small ribosomal subunit protein uS3 (276 aa).

The KH type-2 domain maps to Ile43–Lys111. The span at Ala218–Gly227 shows a compositional bias: low complexity. The disordered stretch occupies residues Ala218–Ala276. A compositionally biased stretch (basic and acidic residues) spans Pro228–Asp243. The segment covering Ala253–Ala276 has biased composition (low complexity).

This sequence belongs to the universal ribosomal protein uS3 family. As to quaternary structure, part of the 30S ribosomal subunit. Forms a tight complex with proteins S10 and S14.

In terms of biological role, binds the lower part of the 30S subunit head. Binds mRNA in the 70S ribosome, positioning it for translation. The chain is Small ribosomal subunit protein uS3 from Pseudarthrobacter chlorophenolicus (strain ATCC 700700 / DSM 12829 / CIP 107037 / JCM 12360 / KCTC 9906 / NCIMB 13794 / A6) (Arthrobacter chlorophenolicus).